Here is a 101-residue protein sequence, read N- to C-terminus: DNA-binding protein Fis (101 aa).

Residues 77–96 (QTRAANMLGINRGTLRKKLK) constitute a DNA-binding region (H-T-H motif).

It belongs to the transcriptional regulatory Fis family. As to quaternary structure, homodimer.

In terms of biological role, activates ribosomal RNA transcription. Plays a direct role in upstream activation of rRNA promoters. In Shewanella frigidimarina (strain NCIMB 400), this protein is DNA-binding protein Fis.